The chain runs to 129 residues: Azurin iso-2 (129 aa).

The 129-residue stretch at 1 to 129 folds into the Plastocyanin-like domain; it reads ASCETTVTSG…MMRGTLKLEE (129 aa). C3 and C26 are oxidised to a cystine. H46, C112, H117, and M121 together coordinate Cu cation.

It is found in the periplasm. In terms of biological role, this methylothroph organism uses azurin in the oxidation of methylamine. Iso-2 is probably the acceptor of electrons from methylamine dehydrogenase. The polypeptide is Azurin iso-2 (Methylomonas sp. (strain J)).